The following is a 477-amino-acid chain: Proton-coupled amino acid transporter 3 (477 aa).

Over 1-54 the chain is Cytoplasmic; sequence MGNVPLLREVGKCQRNMFGRSTASSKGSSNSRSSSSTSPKKGPRREADALMFIQ. Over residues 19-40 the composition is skewed to low complexity; sequence GRSTASSKGSSNSRSSSSTSPK. The interval 19 to 43 is disordered; sequence GRSTASSKGSSNSRSSSSTSPKKGP. The helical transmembrane segment at 55-75 threads the bilayer; sequence IFIHLLKSNIGTGFLGLPLAV. Residues 76–77 lie on the Extracellular side of the membrane; it reads KN. The chain crosses the membrane as a helical span at residues 78–98; the sequence is AGLLVGPVSLLAIGALTVHCM. Residues 99–144 are Cytoplasmic-facing; sequence DILLNCACHLTQRLQRSFVNYEETTMYSLETCPSPWLRTHSVWGRY. The helical transmembrane segment at 145–165 threads the bilayer; the sequence is VVSFLLIVTQLGFCSVYFMFL. At 166–202 the chain is on the extracellular side; the sequence is ADNLQQIMEEAHFTSNVCQPRQSLVMTSILDTRFYML. A helical membrane pass occupies residues 203–223; it reads TILPFLILLVLIQNPQVLSIF. The Cytoplasmic portion of the chain corresponds to 224–225; sequence ST. The chain crosses the membrane as a helical span at residues 226 to 246; that stretch reads LATITTLSSLALIFEYLIQTP. Residues 247–259 lie on the Extracellular side of the membrane; it reads HHSNLPLVANWKT. A helical membrane pass occupies residues 260–280; sequence FLLFFGTAIFTFEGVGMVLPL. Topologically, residues 281–291 are cytoplasmic; that stretch reads KSQMKSPQQFP. Residues 292–312 traverse the membrane as a helical segment; sequence AVLYLGMSFVIFLYICLGTLG. Residues 313-344 lie on the Extracellular side of the membrane; that stretch reads YMKFGTDTQASITLNLPICWLYQSVKLMYSVG. Residues 345-365 form a helical membrane-spanning segment; it reads IFFTYALQFHVPAEIIVPYVV. The Cytoplasmic segment spans residues 366-374; sequence SRVSENWAL. The helical transmembrane segment at 375–395 threads the bilayer; that stretch reads FVDLTVRTALVCLTCFSAVLI. Residues 396–399 are Extracellular-facing; that stretch reads PRLD. The chain crosses the membrane as a helical span at residues 400-420; the sequence is LVISLVGSVSSSALAIIIPPL. Residues 421–432 lie on the Cytoplasmic side of the membrane; that stretch reads LEIATFYSENIS. The helical transmembrane segment at 433 to 453 threads the bilayer; that stretch reads CATIVKDIMISILGLLGCVLG. Topologically, residues 454–477 are extracellular; it reads TYQALYEMTQQTHFYMANSTRVHI.

The protein belongs to the amino acid/polyamine transporter 2 family. Specifically expressed in testis.

It localises to the membrane. The sequence is that of Proton-coupled amino acid transporter 3 (Slc36a3) from Mus musculus (Mouse).